Here is a 549-residue protein sequence, read N- to C-terminus: MVSISKSLVADICVGSSPPTVRFVTLLENHDISNTTFPSLSGVLAQYGSSLQGPAGLQHVGLAQDQKYQHALTKGLKAVEKLQHFLDGPAPMSGDPVVLRCSSARSSTLLEITDETITSGPPCAGAAREREGITSFHRMKFHLPKHVGCVQDVHETSSQMLHLSCDGLRSEDTLFDRFGRWSRDHVTIVSGMCLFSDKIMRDAVQGDGKLDVSKLSSQEPTLYELEIIARSSSAIADVASHILGKNGAAKPIPLEIVLDAPSWHYFQVVHGNLASGHCTPAEALDWLQAVELRCEQVTTVFENSVRHEMGLRGVPAGFYHILAAPGTAGVGTSIRQALTSGMVPDIADCMDAICEVEGERWAMFYSLIPEKDRPCDFRSLGNLFYIYEVVRPALAAKNGSTAAELEVSGPNSALDDSSSSGHSDILDSALHLKANVERPLIMSIDDRAERKIYSKAQAFIKKIRRAPQIPSHPLLLELYSARRVFINGNTGGDSLYWNDSSPHPLRMNTTAGSPELEAFGVIRNLYGNDCAQNLQRWFSEAGVNVSGHT.

The Conserved DDXXE motif motif lies at D445–E449.

It belongs to the arginine-containing cyclodipeptide synthase family.

It catalyses the reaction L-prolyl-tRNA(Pro) + L-arginyl-tRNA(Arg) = cyclo(L-arginyl-L-prolyl) + tRNA(Pro) + tRNA(Arg) + 2 H(+). It participates in secondary metabolite biosynthesis. In terms of biological role, arginine-containing cyclodipeptide synthase; part of the cluster that mediates the biosynthesis of a highly modified cyclo-arginine-proline dipeptide (cRP). Within the pathway, amaA acts as the scaffold-generating enzyme and is responsible for formation of the cyclo-Arg-Pro diketopiperazine (cRW) from L-arginyl-tRNA(Arg) + L-prolyl-tRNA(Pro). Additional enzymes from the cluster then further modify the cyclo-Arg-Pro diketopiperazine (cRW) scaffold. In Apiospora montagnei (Sphaeria apiospora), this protein is Arginine-containing cyclodipeptide synthase amaA.